Consider the following 289-residue polypeptide: Shikimate dehydrogenase (NADP(+)) (289 aa).

Shikimate-binding positions include 19–21 (SMS) and T66. K70 acts as the Proton acceptor in catalysis. Residues N91 and D106 each coordinate shikimate. Residues 131-135 (GAGGA), 155-160 (NRTLKK), and L229 contribute to the NADP(+) site. Y231 lines the shikimate pocket. Residue G252 coordinates NADP(+).

This sequence belongs to the shikimate dehydrogenase family. Homodimer.

It catalyses the reaction shikimate + NADP(+) = 3-dehydroshikimate + NADPH + H(+). The protein operates within metabolic intermediate biosynthesis; chorismate biosynthesis; chorismate from D-erythrose 4-phosphate and phosphoenolpyruvate: step 4/7. Its function is as follows. Involved in the biosynthesis of the chorismate, which leads to the biosynthesis of aromatic amino acids. Catalyzes the reversible NADPH linked reduction of 3-dehydroshikimate (DHSA) to yield shikimate (SA). The sequence is that of Shikimate dehydrogenase (NADP(+)) from Halothermothrix orenii (strain H 168 / OCM 544 / DSM 9562).